The following is a 174-amino-acid chain: MTAVSIRRPIRILGIDPGLRRTGWGVVDSDGNRLVYVACGSVEPRDTLPLAERLLAIHDGLAKVLAAHAPAEAAVEQTFVNKDGAATLKLGQARGVAMLVPAMHGLLVAEYAPNLVKKTVVGAGHADKTQIQMMLKILLPKADPKTADAADALAIAITHAHHRGAAQRLKAVGA.

Active-site residues include aspartate 16, glutamate 76, and aspartate 148. Residues aspartate 16, glutamate 76, and aspartate 148 each coordinate Mg(2+).

The protein belongs to the RuvC family. In terms of assembly, homodimer which binds Holliday junction (HJ) DNA. The HJ becomes 2-fold symmetrical on binding to RuvC with unstacked arms; it has a different conformation from HJ DNA in complex with RuvA. In the full resolvosome a probable DNA-RuvA(4)-RuvB(12)-RuvC(2) complex forms which resolves the HJ. It depends on Mg(2+) as a cofactor.

It is found in the cytoplasm. The enzyme catalyses Endonucleolytic cleavage at a junction such as a reciprocal single-stranded crossover between two homologous DNA duplexes (Holliday junction).. Its function is as follows. The RuvA-RuvB-RuvC complex processes Holliday junction (HJ) DNA during genetic recombination and DNA repair. Endonuclease that resolves HJ intermediates. Cleaves cruciform DNA by making single-stranded nicks across the HJ at symmetrical positions within the homologous arms, yielding a 5'-phosphate and a 3'-hydroxyl group; requires a central core of homology in the junction. The consensus cleavage sequence is 5'-(A/T)TT(C/G)-3'. Cleavage occurs on the 3'-side of the TT dinucleotide at the point of strand exchange. HJ branch migration catalyzed by RuvA-RuvB allows RuvC to scan DNA until it finds its consensus sequence, where it cleaves and resolves the cruciform DNA. The polypeptide is Crossover junction endodeoxyribonuclease RuvC (Rhodopseudomonas palustris (strain ATCC BAA-98 / CGA009)).